Here is a 671-residue protein sequence, read N- to C-terminus: Probable potassium transport system protein Kup 2 (671 aa).

Transmembrane regions (helical) follow at residues 18 to 38 (GFLI…LYAM), 60 to 80 (VSLV…LIAL), 103 to 123 (WLIV…ALTP), 149 to 169 (VTTL…ASLV), 173 to 193 (FGPI…INSF), 218 to 238 (AGFF…ALYS), 252 to 272 (WPFV…WLLA), 292 to 312 (MVIY…QALI), 343 to 363 (LYIP…VLYF), 373 to 393 (YSLA…YFLI), 402 to 422 (IAFI…ASLV), and 424 to 444 (FING…VMFI).

Belongs to the HAK/KUP transporter (TC 2.A.72) family.

Its subcellular location is the cell membrane. The enzyme catalyses K(+)(in) + H(+)(in) = K(+)(out) + H(+)(out). In terms of biological role, transport of potassium into the cell. Likely operates as a K(+):H(+) symporter. This chain is Probable potassium transport system protein Kup 2, found in Lactococcus lactis subsp. cremoris (strain MG1363).